Here is a 455-residue protein sequence, read N- to C-terminus: Probable carboxypeptidase MCYG_07204 (455 aa).

The first 21 residues, 1 to 21, serve as a signal peptide directing secretion; the sequence is MQKTYLLALLVSSLASVRSLA. N-linked (GlcNAc...) asparagine glycosylation is present at asparagine 93. Residue aspartate 170 participates in Zn(2+) binding. The active-site Proton acceptor is glutamate 202. A Zn(2+)-binding site is contributed by glutamate 203. N-linked (GlcNAc...) asparagine glycosylation is present at asparagine 390.

This sequence belongs to the peptidase M20A family. It depends on Zn(2+) as a cofactor.

It localises to the secreted. The polypeptide is Probable carboxypeptidase MCYG_07204 (Arthroderma otae (strain ATCC MYA-4605 / CBS 113480) (Microsporum canis)).